A 264-amino-acid polypeptide reads, in one-letter code: Thymidylate synthase (264 aa).

Arg-21 contributes to the dUMP binding site. Residue His-51 coordinates (6R)-5,10-methylene-5,6,7,8-tetrahydrofolate. 126 to 127 (RR) is a dUMP binding site. Cys-146 serves as the catalytic Nucleophile. DUMP-binding positions include 166–169 (RSCD), Asn-177, and 207–209 (HLY). Asp-169 contacts (6R)-5,10-methylene-5,6,7,8-tetrahydrofolate. Position 263 (Ser-263) interacts with (6R)-5,10-methylene-5,6,7,8-tetrahydrofolate.

The protein belongs to the thymidylate synthase family. Bacterial-type ThyA subfamily. Homodimer.

It localises to the cytoplasm. It catalyses the reaction dUMP + (6R)-5,10-methylene-5,6,7,8-tetrahydrofolate = 7,8-dihydrofolate + dTMP. It functions in the pathway pyrimidine metabolism; dTTP biosynthesis. Its function is as follows. Catalyzes the reductive methylation of 2'-deoxyuridine-5'-monophosphate (dUMP) to 2'-deoxythymidine-5'-monophosphate (dTMP) while utilizing 5,10-methylenetetrahydrofolate (mTHF) as the methyl donor and reductant in the reaction, yielding dihydrofolate (DHF) as a by-product. This enzymatic reaction provides an intracellular de novo source of dTMP, an essential precursor for DNA biosynthesis. This Buchnera aphidicola subsp. Acyrthosiphon pisum (strain Tuc7) protein is Thymidylate synthase.